We begin with the raw amino-acid sequence, 39 residues long: Photosystem I reaction center subunit IX (39 aa).

The chain crosses the membrane as a helical span at residues phenylalanine 7 to isoleucine 27.

The protein belongs to the PsaJ family.

It localises to the cellular thylakoid membrane. May help in the organization of the PsaE and PsaF subunits. The sequence is that of Photosystem I reaction center subunit IX from Synechococcus sp. (strain JA-2-3B'a(2-13)) (Cyanobacteria bacterium Yellowstone B-Prime).